The primary structure comprises 155 residues: Transcriptional repressor NrdR (155 aa).

The segment at 3–34 is a zinc-finger region; it reads CPYCGHLEDRVVDSRETQDGQATRRRRACLSC. The ATP-cone domain maps to 49–139; the sequence is PQVVKKDGRR…VYRAFRDVGE (91 aa).

The protein belongs to the NrdR family. Zn(2+) is required as a cofactor.

Negatively regulates transcription of bacterial ribonucleotide reductase nrd genes and operons by binding to NrdR-boxes. This Anaeromyxobacter dehalogenans (strain 2CP-1 / ATCC BAA-258) protein is Transcriptional repressor NrdR.